The chain runs to 55 residues: Large ribosomal subunit protein bL33 (55 aa).

This sequence belongs to the bacterial ribosomal protein bL33 family.

The sequence is that of Large ribosomal subunit protein bL33 from Deinococcus geothermalis (strain DSM 11300 / CIP 105573 / AG-3a).